A 215-amino-acid chain; its full sequence is Redox-sensing transcriptional repressor Rex (215 aa).

A DNA-binding region (H-T-H motif) is located at residues 18 to 57; that stretch reads LYYRFLKNLHASGKQRVSSAELSDAVKVDSATIRRDFSYF. Residue 92–97 coordinates NAD(+); sequence GVGNLG.

The protein belongs to the transcriptional regulatory Rex family. In terms of assembly, homodimer.

The protein resides in the cytoplasm. Its function is as follows. Modulates transcription in response to changes in cellular NADH/NAD(+) redox state. The sequence is that of Redox-sensing transcriptional repressor Rex from Bacillus licheniformis (strain ATCC 14580 / DSM 13 / JCM 2505 / CCUG 7422 / NBRC 12200 / NCIMB 9375 / NCTC 10341 / NRRL NRS-1264 / Gibson 46).